The chain runs to 477 residues: Glycogen synthase (477 aa).

ADP-alpha-D-glucose is bound at residue K15.

The protein belongs to the glycosyltransferase 1 family. Bacterial/plant glycogen synthase subfamily.

The enzyme catalyses [(1-&gt;4)-alpha-D-glucosyl](n) + ADP-alpha-D-glucose = [(1-&gt;4)-alpha-D-glucosyl](n+1) + ADP + H(+). It functions in the pathway glycan biosynthesis; glycogen biosynthesis. Functionally, synthesizes alpha-1,4-glucan chains using ADP-glucose. The polypeptide is Glycogen synthase (Serratia proteamaculans (strain 568)).